The following is a 534-amino-acid chain: Peptide chain release factor 3 (534 aa).

Positions 9–278 constitute a tr-type G domain; that stretch reads ARRRTFAIIS…FFVEHAPPPQ (270 aa). Residues 18-25, 86-90, and 140-143 each bind GTP; these read SHPDAGKT, DTPGH, and NKLD.

This sequence belongs to the TRAFAC class translation factor GTPase superfamily. Classic translation factor GTPase family. PrfC subfamily.

The protein resides in the cytoplasm. In terms of biological role, increases the formation of ribosomal termination complexes and stimulates activities of RF-1 and RF-2. It binds guanine nucleotides and has strong preference for UGA stop codons. It may interact directly with the ribosome. The stimulation of RF-1 and RF-2 is significantly reduced by GTP and GDP, but not by GMP. In Xanthomonas euvesicatoria pv. vesicatoria (strain 85-10) (Xanthomonas campestris pv. vesicatoria), this protein is Peptide chain release factor 3.